The following is a 718-amino-acid chain: MIGTRVGGSGSTEIVQANQPQPSAAVAQAHPHAVSPSSNPPLTASQSAAQAPESSAAGAARLPVAPRHLPTLEKFRAEQPTVQGTSTPTISANAALLIGSLLQSEKLPFEVMAARLSPERYALQQFHGSDLQQMLGRFAEPGHLPGKAETEQLIKGFARSLADQLEHFQLMHDATAEAFGPGGLRDRNTLAVSQAALGEYAGRASKSIEAGLNHSLAVLDERIAALDSQLEGATEDSRPVLLMDRQALETARAMLSDLHVDFCKSPEAKRLSAVAAHTQMDALIDKLNVDRSSVGGWKGIGPIVAAAVPQFMVSMLHLGYIRTATSDAMKDAVPEKSADASMKRALAVGLTAGVAHEGVTNLLKPMVQAGFQKAGLNERLNMVPLKGIDTDSVIPDPFELKNDNGALVRKTPEEAAEDKAFVASERAVLNQKKVQVSSTHPLGEMIPYGAFGGGQAVRQMLNDFNLLNGQTLSARAVTSGIAGAISATTQTIAQLNSTYVDPRGRKIPVFTPDRANADLGKDLAKGLDLREPAVRTAFYSKAVSGVQSAALNGALPSVAVQPQGASGTLSAGNIMRNMALAATGSVSYLSTLYANQSVTAEAKALKEAGMGGATPMVARTETALSNIRHPDRASLPHTFQPDTLGGVPRAVENAYHMARGALQLPTQVVVDTVRVVEDGVASGVSSLRDAHKPAETSSPTADDAAAVELTAMEEGRRR.

Positions 1–10 (MIGTRVGGSG) are enriched in gly residues. Disordered stretches follow at residues 1 to 63 (MIGT…ARLP) and 683 to 718 (GVSSLRDAHKPAETSSPTADDAAAVELTAMEEGRRR). Over residues 11 to 22 (STEIVQANQPQP) the composition is skewed to polar residues. The span at 44-60 (ASQSAAQAPESSAAGAA) shows a compositional bias: low complexity.

In terms of assembly, interacts with the chaperone ShcM.

Its subcellular location is the secreted. The protein resides in the host membrane. In terms of biological role, involved in the suppression of basal resistance and promotion of disease symptoms in plants. May be involved in the inhibition of a host vesicle trafficking pathway. The sequence is that of Effector protein hopM1 (hopM1) from Pseudomonas syringae pv. syringae (strain B728a).